A 619-amino-acid polypeptide reads, in one-letter code: Chaperone protein HscA homolog (619 aa).

This sequence belongs to the heat shock protein 70 family.

Its function is as follows. Chaperone involved in the maturation of iron-sulfur cluster-containing proteins. Has a low intrinsic ATPase activity which is markedly stimulated by HscB. The protein is Chaperone protein HscA homolog of Chromobacterium violaceum (strain ATCC 12472 / DSM 30191 / JCM 1249 / CCUG 213 / NBRC 12614 / NCIMB 9131 / NCTC 9757 / MK).